Consider the following 47-residue polypeptide: Large ribosomal subunit protein bL34 (47 aa).

Belongs to the bacterial ribosomal protein bL34 family.

The sequence is that of Large ribosomal subunit protein bL34 from Mycobacteroides abscessus (strain ATCC 19977 / DSM 44196 / CCUG 20993 / CIP 104536 / JCM 13569 / NCTC 13031 / TMC 1543 / L948) (Mycobacterium abscessus).